Reading from the N-terminus, the 131-residue chain is Hydrogenase maturation factor HypA (131 aa).

His2 is a Ni(2+) binding site. Residues Cys73, Cys76, Cys105, and Cys108 each coordinate Zn(2+).

It belongs to the HypA/HybF family.

Its function is as follows. Involved in the maturation of [NiFe] hydrogenases. Required for nickel insertion into the metal center of the hydrogenase. In Thermomicrobium roseum (strain ATCC 27502 / DSM 5159 / P-2), this protein is Hydrogenase maturation factor HypA.